The sequence spans 34 residues: MSDIN-like toxin proprotein 3 (34 aa).

Residues 1-10 constitute a propeptide that is removed on maturation; that stretch reads MSDINTARLP. Positions 11–20 form a cross-link, cyclopeptide (Phe-Pro); sequence FFQPPEFRPP. A propeptide spanning residues 21–34 is cleaved from the precursor; sequence CVGDDIEMVLTRGE.

It belongs to the MSDIN fungal toxin family. Processed by the macrocyclase-peptidase enzyme POPB to yield a toxic cyclic decapeptide. POPB first removes 10 residues from the N-terminus. Conformational trapping of the remaining peptide forces the enzyme to release this intermediate rather than proceed to macrocyclization. The enzyme rebinds the remaining peptide in a different conformation and catalyzes macrocyclization of the N-terminal 10 residues.

Its function is as follows. Probable toxin that belongs to the MSDIN-like toxin family responsible for a large number of food poisoning cases and deaths. This chain is MSDIN-like toxin proprotein 3, found in Amanita bisporigera (Destroying angel).